The chain runs to 266 residues: Succinate dehydrogenase [ubiquinone] iron-sulfur subunit, mitochondrial (266 aa).

Residues 1–20 constitute a mitochondrion transit peptide; sequence MLNVLLRRKAFCLVTKKGMA. Positions 36–127 constitute a 2Fe-2S ferredoxin-type domain; the sequence is FKVYRWNPDE…QLKIYPLPHM (92 aa). C87, C92, C95, and C107 together coordinate [2Fe-2S] cluster. Residues 169-199 enclose the 4Fe-4S ferredoxin-type domain; the sequence is DRKKLDGLYECILCACCSTSCPSYWWNQEQY. Residues C179, C182, and C185 each contribute to the [4Fe-4S] cluster site. C189 provides a ligand contact to [3Fe-4S] cluster. W194 serves as a coordination point for a ubiquinone. [3Fe-4S] cluster-binding residues include C236 and C242. Residue C246 coordinates [4Fe-4S] cluster.

The protein belongs to the succinate dehydrogenase/fumarate reductase iron-sulfur protein family. As to quaternary structure, component of complex II composed of four subunits: a flavoprotein (FP), an iron-sulfur protein (IP), and a cytochrome b composed of a large and a small subunit. Requires [2Fe-2S] cluster as cofactor. It depends on [3Fe-4S] cluster as a cofactor. The cofactor is [4Fe-4S] cluster.

The protein resides in the mitochondrion inner membrane. It carries out the reaction a quinone + succinate = fumarate + a quinol. It participates in carbohydrate metabolism; tricarboxylic acid cycle; fumarate from succinate (eukaryal route): step 1/1. In terms of biological role, subunit of succinate dehydrogenase (SDH) that is involved in complex II of the mitochondrial electron transport chain and is responsible for transferring electrons from succinate to ubiquinone (coenzyme Q). SDH1 and SDH2 form the catalytic dimer. Electrons flow from succinate to the FAD bound to SDH1, and sequentially through the iron-sulfur clusters bound to SDH2 and enter the membrane dimer formed by SDH3 and SDH4. The chain is Succinate dehydrogenase [ubiquinone] iron-sulfur subunit, mitochondrial (SDH2) from Saccharomyces cerevisiae (strain ATCC 204508 / S288c) (Baker's yeast).